The following is a 375-amino-acid chain: Probable protein-glutamate methylesterase BB_0415 (375 aa).

Residues 6–120 (SVLIIEYFAV…SHEIKKEQII (115 aa)) enclose the Response regulatory domain. The 193-residue stretch at 183–375 (KLRKFDIIAI…KLLKAILINS (193 aa)) folds into the CheB-type methylesterase domain. Catalysis depends on residues Ser-195, His-221, and Asp-317.

It catalyses the reaction [protein]-L-glutamate 5-O-methyl ester + H2O = L-glutamyl-[protein] + methanol + H(+). This is Probable protein-glutamate methylesterase BB_0415 from Borreliella burgdorferi (strain ATCC 35210 / DSM 4680 / CIP 102532 / B31) (Borrelia burgdorferi).